Here is a 218-residue protein sequence, read N- to C-terminus: Small ribosomal subunit protein uS3 (218 aa).

Residues 38–106 (IREYINKRLQ…REHINIVEIK (69 aa)) enclose the KH type-2 domain.

The protein belongs to the universal ribosomal protein uS3 family. In terms of assembly, part of the 30S ribosomal subunit. Forms a tight complex with proteins S10 and S14.

In terms of biological role, binds the lower part of the 30S subunit head. Binds mRNA in the 70S ribosome, positioning it for translation. This Geobacillus stearothermophilus (Bacillus stearothermophilus) protein is Small ribosomal subunit protein uS3.